We begin with the raw amino-acid sequence, 569 residues long: Proline--tRNA ligase (569 aa).

This sequence belongs to the class-II aminoacyl-tRNA synthetase family. ProS type 1 subfamily. As to quaternary structure, homodimer.

It is found in the cytoplasm. It carries out the reaction tRNA(Pro) + L-proline + ATP = L-prolyl-tRNA(Pro) + AMP + diphosphate. Its function is as follows. Catalyzes the attachment of proline to tRNA(Pro) in a two-step reaction: proline is first activated by ATP to form Pro-AMP and then transferred to the acceptor end of tRNA(Pro). As ProRS can inadvertently accommodate and process non-cognate amino acids such as alanine and cysteine, to avoid such errors it has two additional distinct editing activities against alanine. One activity is designated as 'pretransfer' editing and involves the tRNA(Pro)-independent hydrolysis of activated Ala-AMP. The other activity is designated 'posttransfer' editing and involves deacylation of mischarged Ala-tRNA(Pro). The misacylated Cys-tRNA(Pro) is not edited by ProRS. The chain is Proline--tRNA ligase from Campylobacter hominis (strain ATCC BAA-381 / DSM 21671 / CCUG 45161 / LMG 19568 / NCTC 13146 / CH001A).